We begin with the raw amino-acid sequence, 360 residues long: MTKAIDPGSQPLALQSLDMRSRDIFRRIVDSYLRDGEPVGSRSLSRILPSSLSPATIRNVMSDLEHLGLIYAPHISAGRLPTQAGLRFFVDAFMELGDLSDEERRTIEAQVRASGSGATLEHMLTEASQMLSGMSRGAGLVLAAKNEVALKHIEFIQLEPTKALAVLVSQNGDVENRVVELPAGITVSQLHEASNFLNAHIRGRTLAEARTEIARIKEETRAALDTLSQDLVEKGLAVWAGAESGLPARLIVRGRANLLENVTAQADIELLRHLFEDMETQDGLIQLLDLAEQGSGVRIFIGSENKLFSLSGSSLVVAPYRDKDARVVGALGVIGPTRLNYARIVPMVDYTAQLISRMLR.

Belongs to the HrcA family.

In terms of biological role, negative regulator of class I heat shock genes (grpE-dnaK-dnaJ and groELS operons). Prevents heat-shock induction of these operons. The protein is Heat-inducible transcription repressor HrcA of Mesorhizobium japonicum (strain LMG 29417 / CECT 9101 / MAFF 303099) (Mesorhizobium loti (strain MAFF 303099)).